The following is a 104-amino-acid chain: Large ribosomal subunit protein uL24 (104 aa).

It belongs to the universal ribosomal protein uL24 family. In terms of assembly, part of the 50S ribosomal subunit.

In terms of biological role, one of two assembly initiator proteins, it binds directly to the 5'-end of the 23S rRNA, where it nucleates assembly of the 50S subunit. Its function is as follows. One of the proteins that surrounds the polypeptide exit tunnel on the outside of the subunit. The protein is Large ribosomal subunit protein uL24 of Chelativorans sp. (strain BNC1).